We begin with the raw amino-acid sequence, 135 residues long: Large ribosomal subunit protein uL16c (135 aa).

It belongs to the universal ribosomal protein uL16 family. In terms of assembly, part of the 50S ribosomal subunit.

It localises to the plastid. Its subcellular location is the chloroplast. The protein is Large ribosomal subunit protein uL16c of Panax ginseng (Korean ginseng).